A 75-amino-acid polypeptide reads, in one-letter code: High-potential iron-sulfur protein (75 aa).

[4Fe-4S] cluster contacts are provided by cysteine 38, cysteine 41, cysteine 54, and cysteine 68.

As to quaternary structure, homodimer. Monomer at different ionic strengths.

Its function is as follows. Specific class of high-redox-potential 4Fe-4S ferredoxins. Functions in anaerobic electron transport in most purple and in some other photosynthetic bacteria and in at least one genus (Paracoccus) of halophilic, denitrifying bacteria. Competent in photosynthetic electron transfer to oxidized cytochrome bc1 complex via the membrane-bound c-type tetraheme. The chain is High-potential iron-sulfur protein (hip) from Rhodoferax fermentans.